The following is a 491-amino-acid chain: 2,3-bisphosphoglycerate-independent phosphoglycerate mutase (491 aa).

Residues Asp11 and Ser61 each coordinate Mn(2+). The active-site Phosphoserine intermediate is the Ser61. Substrate is bound by residues His118, 147-148, Arg177, Arg183, 247-250, and Lys320; these read RD and RNDR. Mn(2+) is bound by residues Asp386, His390, Asp427, His428, and His445.

This sequence belongs to the BPG-independent phosphoglycerate mutase family. Monomer. Mn(2+) serves as cofactor.

It catalyses the reaction (2R)-2-phosphoglycerate = (2R)-3-phosphoglycerate. It functions in the pathway carbohydrate degradation; glycolysis; pyruvate from D-glyceraldehyde 3-phosphate: step 3/5. Its function is as follows. Catalyzes the interconversion of 2-phosphoglycerate and 3-phosphoglycerate. The polypeptide is 2,3-bisphosphoglycerate-independent phosphoglycerate mutase (Helicobacter pylori (strain ATCC 700392 / 26695) (Campylobacter pylori)).